The following is a 379-amino-acid chain: D-threonine aldolase (379 aa).

N6-(pyridoxal phosphate)lysine is present on lysine 59.

Belongs to the DSD1 family. Pyridoxal 5'-phosphate is required as a cofactor. It depends on Mn(2+) as a cofactor. The cofactor is Co(2+). Requires Ni(2+) as cofactor. Mg(2+) serves as cofactor.

The enzyme catalyses D-threonine = acetaldehyde + glycine. It catalyses the reaction D-allo-threonine = acetaldehyde + glycine. With respect to regulation, inhibited by the carbonyl reagents hydroxylamine, phenylhydrazine and semicarbazide. Inhibited by the chelating agent EDTA. Inhibited by the sulfhydryl reagent p-chloromercuribenzoic acid, and by sodium cyanide. Inhibited by iodoacetate, Ag(2)SO(4), HgCl(2) and CdCl(2). Competitively inhibited by beta-hydroxyaspartate and O-phospho-DL-threonine. Catalyzes the reversible cleavage of D-threonine or D-allothreonine into glycine and acetaldehyde. Can also cleave D-beta-phenylserine, D-beta-hydroxy-alpha-aminovaleric acid, D-beta-3,4-dihydroxyphenylserine and D-beta-3,4-methylenedioxyphenylserine into glycine and the corresponding aldehyde compounds. Inactive towards D-serine, beta-hydroxyaspartate and O-phospho-DL-threonine. This chain is D-threonine aldolase, found in Arthrobacter sp.